The chain runs to 264 residues: tRNA pseudouridine synthase A (264 aa).

The active-site Nucleophile is the Asp51. Tyr109 lines the substrate pocket.

It belongs to the tRNA pseudouridine synthase TruA family. As to quaternary structure, homodimer.

It carries out the reaction uridine(38/39/40) in tRNA = pseudouridine(38/39/40) in tRNA. Formation of pseudouridine at positions 38, 39 and 40 in the anticodon stem and loop of transfer RNAs. The protein is tRNA pseudouridine synthase A of Pasteurella multocida (strain Pm70).